The following is a 1280-amino-acid chain: Fibronectin type III domain-containing protein (1280 aa).

Residues 1 to 19 (MWQILLAISIFSLSKLSNA) form the signal peptide. The Extracellular segment spans residues 20–1156 (QQQPKVAPPQ…RVSTPIYQSA (1137 aa)). Disulfide bonds link Cys58–Cys111, Cys268–Cys321, Cys369–Cys417, Cys460–Cys511, and Cys553–Cys604. Fibronectin type-III domains are found at residues 628 to 722 (PFPP…TGSF), 730 to 824 (PEKW…VKQF), 830 to 933 (PTGK…VAAD), 939 to 1033 (PGPP…TEKT), and 1039 to 1131 (PAKP…PASD). Polar residues predominate over residues 1118 to 1130 (YPSQENPQESPAS). Residues 1118 to 1144 (YPSQENPQESPASDITEARPRPGISNV) are disordered. The helical transmembrane segment at 1157 to 1177 (WFIALLVLIALLLLVLLTFVL) threads the bilayer. The Cytoplasmic portion of the chain corresponds to 1178–1280 (YTRHQGAKYL…KDPSSLATFV (103 aa)). The segment at 1206–1280 (DEEEGSFSNN…KDPSSLATFV (75 aa)) is disordered. Residues 1262–1273 (DEKKAPPEEKDP) show a composition bias toward basic and acidic residues.

Component of the acid-insoluble organic matrix of the aragonitic skeleton (at protein level).

The protein localises to the membrane. The protein is Fibronectin type III domain-containing protein of Acropora millepora (Staghorn coral).